We begin with the raw amino-acid sequence, 207 residues long: Large ribosomal subunit protein uL4 (207 aa).

Residues 48–87 (THAVKNRSAVSGGGKKPWRQKGTGRARQGSIRSPQFRGGG) are disordered.

The protein belongs to the universal ribosomal protein uL4 family. In terms of assembly, part of the 50S ribosomal subunit.

One of the primary rRNA binding proteins, this protein initially binds near the 5'-end of the 23S rRNA. It is important during the early stages of 50S assembly. It makes multiple contacts with different domains of the 23S rRNA in the assembled 50S subunit and ribosome. In terms of biological role, forms part of the polypeptide exit tunnel. The polypeptide is Large ribosomal subunit protein uL4 (Limosilactobacillus reuteri subsp. reuteri (strain JCM 1112) (Lactobacillus reuteri)).